An 82-amino-acid chain; its full sequence is Small ribosomal subunit protein bS16 (82 aa).

It belongs to the bacterial ribosomal protein bS16 family.

This chain is Small ribosomal subunit protein bS16, found in Dehalococcoides mccartyi (strain ATCC BAA-2100 / JCM 16839 / KCTC 5957 / BAV1).